The primary structure comprises 485 residues: Argininosuccinate lyase (485 aa).

Belongs to the lyase 1 family. Argininosuccinate lyase subfamily.

It is found in the cytoplasm. It catalyses the reaction 2-(N(omega)-L-arginino)succinate = fumarate + L-arginine. It participates in amino-acid biosynthesis; L-arginine biosynthesis; L-arginine from L-ornithine and carbamoyl phosphate: step 3/3. The polypeptide is Argininosuccinate lyase (Nitrosopumilus maritimus (strain SCM1)).